Consider the following 637-residue polypeptide: MYNDQIHKITYSGVEVFEYTINGFPLMKRCHDNWLNATQILKIAELDKPRRTRILEKFAQKGLHEKIQGGCGKYQGTWVPSERAVELAHEYNVFDLIQPLIEYSGSAFMPMSTFTPQSNRKPTEAYRRNSPVKKSFSRPSHSLLYPYTSSNNMTSTSRMSGIHDALSLQSDFTRSPDMPSDSFTGSLHDIKASPFSSNNYAQSLLDYFLLPNTTQPPDFVYDRPSDWDVNAGIDEDGHTALHWAAAMGNLEMMHALLQAGANVVAVNYLQQTSLMRCVMFTMNYDLQTFEVVSELLQSAICMNDSFGQTVFHHIALLASSKSKMEAARYYMDILLQNLTATQSVDVAAQIINLQDDHGDTALLICARNGAKKCARLLLSFYASSSIPNNQGQYPTDFLSSKDMSFPENDDSPLNSKIEDNLIDNLKYPQSLDDHLSSKKPISYFSNKLTHQTLPNVFTQLSELSKCHEASLAEKQLTYNLAMEALEQTVRETETCQRLWNERTNNDENYLVNQREDLIHQCKKFLHTLKTARYYLETVQLHQLKKYVTYFSQIWSTDELADISETKNLVGHDTKTNRSSLSSKHEVDLFTAENEAAREKLVEQLCSLQAQRKQKINEILNLLSMGMYNTINTDQSGS.

Residues 6-112 (IHKITYSGVE…YSGSAFMPMS (107 aa)) enclose the HTH APSES-type domain. A DNA-binding region (H-T-H motif) is located at residues 37 to 58 (ATQILKIAELDKPRRTRILEKF). Positions 114–137 (FTPQSNRKPTEAYRRNSPVKKSFS) are disordered. ANK repeat units follow at residues 236 to 265 (DGHT…NVVA) and 357 to 386 (HGDT…SSSI).

In terms of assembly, DSC1 contains cdc10 and sct1/res1.

Functionally, acts as a positive regulator of the mitotic cell cycle and as a negative regulator of sexual differentiation. May be involved in the transcriptional regulation of the cdc22 and cdt1 genes. Is an integral component of the DSC1-like complex. This chain is Cell division cycle-related protein res1/sct1 (res1), found in Schizosaccharomyces pombe (strain 972 / ATCC 24843) (Fission yeast).